The sequence spans 20 residues: Octopamine receptor (20 aa).

Belongs to the G-protein coupled receptor 1 family.

The protein resides in the cell membrane. In terms of biological role, putative receptor for octopamine. Octopamine (OA) is a neurotransmitter, neurohormone, and neuromodulator in invertebrates. The activity of this receptor is mediated by G proteins which activate adenylyl cyclase. The protein is Octopamine receptor of Photinus pyralis (Common eastern firefly).